Consider the following 336-residue polypeptide: N-acetyl-gamma-glutamyl-phosphate reductase (336 aa).

Residue Cys-148 is part of the active site.

This sequence belongs to the NAGSA dehydrogenase family. Type 1 subfamily.

The protein localises to the cytoplasm. It catalyses the reaction N-acetyl-L-glutamate 5-semialdehyde + phosphate + NADP(+) = N-acetyl-L-glutamyl 5-phosphate + NADPH + H(+). It participates in amino-acid biosynthesis; L-arginine biosynthesis; N(2)-acetyl-L-ornithine from L-glutamate: step 3/4. In terms of biological role, catalyzes the NADPH-dependent reduction of N-acetyl-5-glutamyl phosphate to yield N-acetyl-L-glutamate 5-semialdehyde. This is N-acetyl-gamma-glutamyl-phosphate reductase from Campylobacter curvus (strain 525.92).